The sequence spans 93 residues: Small ribosomal subunit protein uS19 (93 aa).

It belongs to the universal ribosomal protein uS19 family.

Its function is as follows. Protein S19 forms a complex with S13 that binds strongly to the 16S ribosomal RNA. This Oleidesulfovibrio alaskensis (strain ATCC BAA-1058 / DSM 17464 / G20) (Desulfovibrio alaskensis) protein is Small ribosomal subunit protein uS19.